We begin with the raw amino-acid sequence, 149 residues long: Inner membrane protein YidI (149 aa).

Topologically, residues Met-1–Lys-8 are cytoplasmic. Residues Ile-9–Gly-31 form a helical membrane-spanning segment. Residues Pro-32–Lys-77 lie on the Periplasmic side of the membrane. Residues Ile-78 to Gly-97 form a helical membrane-spanning segment. Over Gly-98–Thr-117 the chain is Cytoplasmic. A helical transmembrane segment spans residues Leu-118 to Phe-140. Over Ser-141–Val-149 the chain is Periplasmic.

It localises to the cell inner membrane. The sequence is that of Inner membrane protein YidI (yidI) from Escherichia coli (strain K12).